A 200-amino-acid polypeptide reads, in one-letter code: Holliday junction branch migration complex subunit RuvA (200 aa).

A domain I region spans residues 1-63; sequence MYAYIKGTLT…EDAQLLYGFI (63 aa). Residues 64 to 142 form a domain II region; it reads NQEEKDMFLS…INDVDSSQIL (79 aa). The segment at 143-149 is flexible linker; that stretch reads NTDTQDH. The domain III stretch occupies residues 150–200; the sequence is ANAPIIKEALLALEALGYSKRELTKVEKSLSKETFDSVDDAVKRGLQLLIA.

It belongs to the RuvA family. In terms of assembly, homotetramer. Forms an RuvA(8)-RuvB(12)-Holliday junction (HJ) complex. HJ DNA is sandwiched between 2 RuvA tetramers; dsDNA enters through RuvA and exits via RuvB. An RuvB hexamer assembles on each DNA strand where it exits the tetramer. Each RuvB hexamer is contacted by two RuvA subunits (via domain III) on 2 adjacent RuvB subunits; this complex drives branch migration. In the full resolvosome a probable DNA-RuvA(4)-RuvB(12)-RuvC(2) complex forms which resolves the HJ.

The protein resides in the cytoplasm. Functionally, the RuvA-RuvB-RuvC complex processes Holliday junction (HJ) DNA during genetic recombination and DNA repair, while the RuvA-RuvB complex plays an important role in the rescue of blocked DNA replication forks via replication fork reversal (RFR). RuvA specifically binds to HJ cruciform DNA, conferring on it an open structure. The RuvB hexamer acts as an ATP-dependent pump, pulling dsDNA into and through the RuvAB complex. HJ branch migration allows RuvC to scan DNA until it finds its consensus sequence, where it cleaves and resolves the cruciform DNA. The chain is Holliday junction branch migration complex subunit RuvA from Staphylococcus saprophyticus subsp. saprophyticus (strain ATCC 15305 / DSM 20229 / NCIMB 8711 / NCTC 7292 / S-41).